We begin with the raw amino-acid sequence, 543 residues long: CTP synthase (543 aa).

The interval 1–265 is amidoligase domain; it reads MTRYIFVTGG…DDFVVERFGL (265 aa). CTP is bound at residue serine 13. Position 13 (serine 13) interacts with UTP. Residues 14-19 and aspartate 71 contribute to the ATP site; that span reads SLGKGI. Aspartate 71 and glutamate 139 together coordinate Mg(2+). Residues 146–148, 186–191, and lysine 222 each bind CTP; these read DIE and KTKPTQ. Residues 186–191 and lysine 222 contribute to the UTP site; that span reads KTKPTQ. In terms of domain architecture, Glutamine amidotransferase type-1 spans 290–541; sequence TIAMVGKYME…VKAALAQHQK (252 aa). Glycine 351 serves as a coordination point for L-glutamine. Cysteine 378 serves as the catalytic Nucleophile; for glutamine hydrolysis. Residues 379 to 382, glutamate 402, and arginine 469 contribute to the L-glutamine site; that span reads LGMQ. Catalysis depends on residues histidine 514 and glutamate 516.

The protein belongs to the CTP synthase family. Homotetramer.

It catalyses the reaction UTP + L-glutamine + ATP + H2O = CTP + L-glutamate + ADP + phosphate + 2 H(+). It carries out the reaction L-glutamine + H2O = L-glutamate + NH4(+). The catalysed reaction is UTP + NH4(+) + ATP = CTP + ADP + phosphate + 2 H(+). Its pathway is pyrimidine metabolism; CTP biosynthesis via de novo pathway; CTP from UDP: step 2/2. Allosterically activated by GTP, when glutamine is the substrate; GTP has no effect on the reaction when ammonia is the substrate. The allosteric effector GTP functions by stabilizing the protein conformation that binds the tetrahedral intermediate(s) formed during glutamine hydrolysis. Inhibited by the product CTP, via allosteric rather than competitive inhibition. Its function is as follows. Catalyzes the ATP-dependent amination of UTP to CTP with either L-glutamine or ammonia as the source of nitrogen. Regulates intracellular CTP levels through interactions with the four ribonucleotide triphosphates. In Pseudomonas syringae pv. tomato (strain ATCC BAA-871 / DC3000), this protein is CTP synthase.